Here is a 330-residue protein sequence, read N- to C-terminus: Aspartate--ammonia ligase (330 aa).

This sequence belongs to the class-II aminoacyl-tRNA synthetase family. AsnA subfamily.

Its subcellular location is the cytoplasm. The enzyme catalyses L-aspartate + NH4(+) + ATP = L-asparagine + AMP + diphosphate + H(+). It functions in the pathway amino-acid biosynthesis; L-asparagine biosynthesis; L-asparagine from L-aspartate (ammonia route): step 1/1. The sequence is that of Aspartate--ammonia ligase from Yersinia pseudotuberculosis serotype O:1b (strain IP 31758).